A 451-amino-acid polypeptide reads, in one-letter code: UDP-N-acetylmuramate--L-alanine ligase (451 aa).

110 to 116 (GTHGKTT) contributes to the ATP binding site.

It belongs to the MurCDEF family.

It is found in the cytoplasm. It carries out the reaction UDP-N-acetyl-alpha-D-muramate + L-alanine + ATP = UDP-N-acetyl-alpha-D-muramoyl-L-alanine + ADP + phosphate + H(+). The protein operates within cell wall biogenesis; peptidoglycan biosynthesis. Functionally, cell wall formation. This Francisella tularensis subsp. holarctica (strain FTNF002-00 / FTA) protein is UDP-N-acetylmuramate--L-alanine ligase.